We begin with the raw amino-acid sequence, 662 residues long: Interleukin-12 receptor subunit beta-1 (662 aa).

The N-terminal stretch at 1–23 (MEPLVTWVVPLLFLFLLSRQGAA) is a signal peptide. Residues 24-545 (CRTSECCFQD…RFSIEVQVSD (522 aa)) lie on the Extracellular side of the membrane. 5 consecutive Fibronectin type-III domains span residues 46–136 (GPRD…LYNS), 142–234 (PLGD…VPPE), 237–337 (PQPQ…IPAD), 338–444 (THTE…GNAS), and 448–542 (TPHH…IEVQ). A disulfide bond links Cys52 and Cys62. Asn121 is a glycosylation site (N-linked (GlcNAc...) asparagine). The short motif at 222–226 (WSKWS) is the WSXWS motif element. N-linked (GlcNAc...) asparagine glycosylation is found at Asn329, Asn346, Asn352, Asn442, and Asn456. A helical membrane pass occupies residues 546 to 570 (WLIFFASLGSFLSILLVGVLGYLGL). Over 571 to 662 (NRAARHLCPP…EDGDRCKAKM (92 aa)) the chain is Cytoplasmic. A Box 1 motif motif is present at residues 577–585 (LCPPLPTPC). The span at 626-637 (GERTEPLEKTEL) shows a compositional bias: basic and acidic residues. The segment at 626 to 648 (GERTEPLEKTELPEGAPELALDT) is disordered.

Belongs to the type I cytokine receptor family. Type 2 subfamily. In terms of assembly, dimer or oligomer; disulfide-linked. Interacts with IL12RB2 to form the high affinity IL12 receptor. Heterodimer with IL23R; in presence of IL23. The heterodimer forms the IL23 receptor.

The protein resides in the membrane. In terms of biological role, functions as an interleukin receptor which binds interleukin-12 with low affinity and is involved in IL12 transduction. Associated with IL12RB2 it forms a functional, high affinity receptor for IL12. Also associates with IL23R to form the interleukin-23 receptor which functions in IL23 signal transduction probably through activation of the Jak-Stat signaling cascade. This chain is Interleukin-12 receptor subunit beta-1 (IL12RB1), found in Homo sapiens (Human).